We begin with the raw amino-acid sequence, 134 residues long: Profilin-2 (134 aa).

C13 and C118 form a disulfide bridge. The Involved in PIP2 interaction motif lies at A84 to T100. A Phosphothreonine modification is found at T114.

The protein belongs to the profilin family. Occurs in many kinds of cells as a complex with monomeric actin in a 1:1 ratio. Phosphorylated by MAP kinases.

It is found in the cytoplasm. Its subcellular location is the cytoskeleton. Its function is as follows. Binds to actin and affects the structure of the cytoskeleton. At high concentrations, profilin prevents the polymerization of actin, whereas it enhances it at low concentrations. By binding to PIP2, it inhibits the formation of IP3 and DG. This chain is Profilin-2 (PRO2), found in Olea europaea (Common olive).